The chain runs to 728 residues: Catalase-peroxidase (728 aa).

The segment at residues 91–218 is a cross-link (tryptophyl-tyrosyl-methioninium (Trp-Tyr) (with M-244)); the sequence is WHSAGTYRTA…LAAVQMGLIY (128 aa). His-92 (proton acceptor) is an active-site residue. Residues 218 to 244 constitute a cross-link (tryptophyl-tyrosyl-methioninium (Tyr-Met) (with W-91)); it reads YVNPEGPDGNPDPVAAARDIRDTFARM. His-259 contributes to the heme b binding site.

The protein belongs to the peroxidase family. Peroxidase/catalase subfamily. As to quaternary structure, homodimer or homotetramer. Heme b serves as cofactor. Post-translationally, formation of the three residue Trp-Tyr-Met cross-link is important for the catalase, but not the peroxidase activity of the enzyme.

The catalysed reaction is H2O2 + AH2 = A + 2 H2O. It carries out the reaction 2 H2O2 = O2 + 2 H2O. Functionally, bifunctional enzyme with both catalase and broad-spectrum peroxidase activity. The protein is Catalase-peroxidase of Burkholderia mallei (strain NCTC 10247).